A 260-amino-acid chain; its full sequence is Deoxyribonuclease-1 (260 aa).

An N-linked (GlcNAc...) asparagine glycan is attached at Asn18. The active site involves Glu78. An intrachain disulfide couples Cys101 to Cys104. The active site involves His134. Cys173 and Cys209 are joined by a disulfide.

The protein belongs to the DNase I family. Ca(2+) is required as a cofactor. Mg(2+) serves as cofactor.

It is found in the secreted. Its subcellular location is the zymogen granule. The protein resides in the nucleus envelope. It catalyses the reaction Endonucleolytic cleavage to 5'-phosphodinucleotide and 5'-phosphooligonucleotide end-products.. Serum endocuclease secreted into body fluids by a wide variety of exocrine and endocrine organs. Expressed by non-hematopoietic tissues and preferentially cleaves protein-free DNA. Among other functions, seems to be involved in cell death by apoptosis. Binds specifically to G-actin and blocks actin polymerization. Together with DNASE1L3, plays a key role in degrading neutrophil extracellular traps (NETs). NETs are mainly composed of DNA fibers and are released by neutrophils to bind pathogens during inflammation. Degradation of intravascular NETs by DNASE1 and DNASE1L3 is required to prevent formation of clots that obstruct blood vessels and cause organ damage following inflammation. The sequence is that of Deoxyribonuclease-1 (DNASE1) from Ovis aries (Sheep).